A 140-amino-acid chain; its full sequence is Large ribosomal subunit protein bL21 (140 aa).

The interval 106 to 140 (SGVKPAVGARTKIEPAVKPAKAKKSEAEASAEDAN) is disordered.

It belongs to the bacterial ribosomal protein bL21 family. In terms of assembly, part of the 50S ribosomal subunit. Contacts protein L20.

Its function is as follows. This protein binds to 23S rRNA in the presence of protein L20. The polypeptide is Large ribosomal subunit protein bL21 (Paracoccus denitrificans (strain Pd 1222)).